The chain runs to 206 residues: Molybdopterin synthase catalytic subunit (206 aa).

Residues 1-23 (MATQQPTQTDNSAQAQPPQTNPA) show a composition bias toward polar residues. The interval 1–27 (MATQQPTQTDNSAQAQPPQTNPAKPTE) is disordered. Residues 131–132 (HR), K147, and 154–156 (KRE) contribute to the substrate site. The span at 177–188 (KVDEPRIGKGEV) shows a compositional bias: basic and acidic residues. Positions 177–206 (KVDEPRIGKGEVDEKEDEGDSGNGGNDRKS) are disordered. Residues 197–206 (SGNGGNDRKS) are compositionally biased toward gly residues.

It belongs to the MoaE family. MOCS2B subfamily. In terms of assembly, heterotetramer; composed of 2 small (MOCS2A) and 2 large (MOCS2B) subunits.

The protein resides in the cytoplasm. The catalysed reaction is 2 [molybdopterin-synthase sulfur-carrier protein]-C-terminal-Gly-aminoethanethioate + cyclic pyranopterin phosphate + H2O = molybdopterin + 2 [molybdopterin-synthase sulfur-carrier protein]-C-terminal Gly-Gly + 2 H(+). It functions in the pathway cofactor biosynthesis; molybdopterin biosynthesis. Functionally, catalytic subunit of the molybdopterin synthase complex, a complex that catalyzes the conversion of precursor Z into molybdopterin. Acts by mediating the incorporation of 2 sulfur atoms from thiocarboxylated MOCS2A into precursor Z to generate a dithiolene group. In Neurospora crassa (strain ATCC 24698 / 74-OR23-1A / CBS 708.71 / DSM 1257 / FGSC 987), this protein is Molybdopterin synthase catalytic subunit (nit-8).